The sequence spans 196 residues: MSNIDNLTSRIVKDAEDKKRIILSEAEEKKSKIIAKKQEKAASEEKIIIEKAETEAVAREERIISSAELQARNEKLKSKQTVISKVFETTIEELCNASSDDFKGFVKTVILNSALAGDENLILNEQGKKMIDSDFVAELNREIGSKGNITLSDKTGNFKGGFILEKNGIEINNTFEALVSSLKDEMGLEVARVLFS.

This sequence belongs to the V-ATPase E subunit family.

Its function is as follows. Produces ATP from ADP in the presence of a proton gradient across the membrane. The polypeptide is V-type proton ATPase subunit E (Clostridium botulinum (strain Eklund 17B / Type B)).